A 339-amino-acid chain; its full sequence is Phenylalanine--tRNA ligase alpha subunit (339 aa).

Glu250 lines the Mg(2+) pocket.

This sequence belongs to the class-II aminoacyl-tRNA synthetase family. Phe-tRNA synthetase alpha subunit type 1 subfamily. In terms of assembly, tetramer of two alpha and two beta subunits. Mg(2+) serves as cofactor.

The protein localises to the cytoplasm. The catalysed reaction is tRNA(Phe) + L-phenylalanine + ATP = L-phenylalanyl-tRNA(Phe) + AMP + diphosphate + H(+). This chain is Phenylalanine--tRNA ligase alpha subunit, found in Azobacteroides pseudotrichonymphae genomovar. CFP2.